The chain runs to 342 residues: tRNA N6-adenosine threonylcarbamoyltransferase (342 aa).

Residues H115 and H119 each coordinate Fe cation. Residues 137–141 (IVSGG), D170, G183, D187, and N276 each bind substrate. D304 serves as a coordination point for Fe cation.

This sequence belongs to the KAE1 / TsaD family. Fe(2+) serves as cofactor.

The protein resides in the cytoplasm. It catalyses the reaction L-threonylcarbamoyladenylate + adenosine(37) in tRNA = N(6)-L-threonylcarbamoyladenosine(37) in tRNA + AMP + H(+). In terms of biological role, required for the formation of a threonylcarbamoyl group on adenosine at position 37 (t(6)A37) in tRNAs that read codons beginning with adenine. Is involved in the transfer of the threonylcarbamoyl moiety of threonylcarbamoyl-AMP (TC-AMP) to the N6 group of A37, together with TsaE and TsaB. TsaD likely plays a direct catalytic role in this reaction. This chain is tRNA N6-adenosine threonylcarbamoyltransferase, found in Staphylococcus haemolyticus (strain JCSC1435).